A 251-amino-acid chain; its full sequence is Hydroxyacylglutathione hydrolase (251 aa).

Zn(2+)-binding residues include histidine 53, histidine 55, aspartate 57, histidine 58, histidine 110, aspartate 127, and histidine 165.

Belongs to the metallo-beta-lactamase superfamily. Glyoxalase II family. In terms of assembly, monomer. Zn(2+) serves as cofactor.

It catalyses the reaction an S-(2-hydroxyacyl)glutathione + H2O = a 2-hydroxy carboxylate + glutathione + H(+). It functions in the pathway secondary metabolite metabolism; methylglyoxal degradation; (R)-lactate from methylglyoxal: step 2/2. Its function is as follows. Thiolesterase that catalyzes the hydrolysis of S-D-lactoyl-glutathione to form glutathione and D-lactic acid. This Escherichia coli O45:K1 (strain S88 / ExPEC) protein is Hydroxyacylglutathione hydrolase.